Reading from the N-terminus, the 189-residue chain is Selenoprotein S (189 aa).

A helical membrane pass occupies residues 28–48; the sequence is SLLATYGWYIVFSCILLYVVF. The tract at residues 78-90 is VCP/p97-interacting motif (VIM); the sequence is RQEALAAARLKMQ. The interval 115-189 is disordered; that stretch reads KIEMWDSMQE…RRGPSSGGUG (75 aa). Residue serine 140 is modified to Phosphoserine. Positions 159 to 173 are enriched in gly residues; it reads RGGGYNPLSGEGGGA. Selenocysteine 188 is a non-standard amino acid (selenocysteine).

Belongs to the selenoprotein S family. Interacts with DERL1 and (via VIM motif) with VCP, suggesting that it forms a membrane complex with DERL1 that serves as a receptor for VCP. Also interacts with DERL2, DERL3 and SELENOK. The SELENOK-SELENOS complex interacts with VCP. Interacts with CCDC47. Post-translationally, truncated SELENOS proteins produced by failed UGA/Sec decoding are ubiquitinated by the CRL2(KLHDC2) and CRL2(KLHDC3) complexes, which recognizes the glycine (Gly) at the C-terminus of truncated SELENOS proteins. Truncated SELENOS proteins produced by failed UGA/Sec decoding are also ubiquitinated by the CRL5(KLHDC1) complex.

The protein resides in the endoplasmic reticulum membrane. It localises to the cytoplasm. In terms of biological role, involved in the degradation process of misfolded endoplasmic reticulum (ER) luminal proteins. Participates in the transfer of misfolded proteins from the ER to the cytosol, where they are destroyed by the proteasome in a ubiquitin-dependent manner. Probably acts by serving as a linker between DERL1, which mediates the retrotranslocation of misfolded proteins into the cytosol, and the ATPase complex VCP, which mediates the translocation and ubiquitination. The polypeptide is Selenoprotein S (Homo sapiens (Human)).